The chain runs to 214 residues: MYKPICGLARDGLPIIGVFALATLVFALLRWPCLATISLLSTIFSFNFFRDPDRTSPTENGIAVSPADGVVCKLGEAADPITGEMRQVVCVFMNVFNVHVNRSPVTGVVSEVRYIPGKFFNASLDKASTDNERNVIVVTDAEGARFTVVQIAGLIARRIVCPAKAGDTLSRGERYGMIKFGSRLDVYLPHGYHPAVAMGQKTMAGVTVLAKKAD.

Ser182 functions as the Schiff-base intermediate with substrate; via pyruvic acid in the catalytic mechanism. Position 182 is a pyruvic acid (Ser); by autocatalysis (Ser182).

It belongs to the phosphatidylserine decarboxylase family. PSD-A subfamily. As to quaternary structure, heterodimer of a large membrane-associated beta subunit and a small pyruvoyl-containing alpha subunit. It depends on pyruvate as a cofactor. Is synthesized initially as an inactive proenzyme. Formation of the active enzyme involves a self-maturation process in which the active site pyruvoyl group is generated from an internal serine residue via an autocatalytic post-translational modification. Two non-identical subunits are generated from the proenzyme in this reaction, and the pyruvate is formed at the N-terminus of the alpha chain, which is derived from the carboxyl end of the proenzyme. The post-translation cleavage follows an unusual pathway, termed non-hydrolytic serinolysis, in which the side chain hydroxyl group of the serine supplies its oxygen atom to form the C-terminus of the beta chain, while the remainder of the serine residue undergoes an oxidative deamination to produce ammonia and the pyruvoyl prosthetic group on the alpha chain.

Its subcellular location is the cell membrane. It catalyses the reaction a 1,2-diacyl-sn-glycero-3-phospho-L-serine + H(+) = a 1,2-diacyl-sn-glycero-3-phosphoethanolamine + CO2. The protein operates within phospholipid metabolism; phosphatidylethanolamine biosynthesis; phosphatidylethanolamine from CDP-diacylglycerol: step 2/2. Functionally, catalyzes the formation of phosphatidylethanolamine (PtdEtn) from phosphatidylserine (PtdSer). This is Phosphatidylserine decarboxylase proenzyme from Solidesulfovibrio magneticus (strain ATCC 700980 / DSM 13731 / RS-1) (Desulfovibrio magneticus).